The following is a 201-amino-acid chain: Ras-related protein Rab-1B (201 aa).

At Met-1 the chain carries N-acetylmethionine. Positions 17, 18, 19, 20, 21, 22, 23, 33, 34, 35, 36, 39, and 40 each coordinate GTP. Position 22 (Ser-22) interacts with Mg(2+). The Switch 1 signature appears at 30–45 (DDTYTESYISTIGVDF). Positions 40 and 63 each coordinate Mg(2+). The interval 64–83 (TAGQERFRTITSSYYRGAHG) is switch 2 region; required for interaction with REP1/CHM. The Switch 2 motif lies at 65-80 (AGQERFRTITSSYYRG). Position 66 (Gly-66) interacts with GTP. Ser-76 is subject to (Microbial infection) O-(2-cholinephosphoryl)serine. A (Microbial infection) O-AMP-tyrosine modification is found at Tyr-77. GTP-binding residues include Asn-121, Lys-122, Asp-124, Ser-151, Ala-152, and Lys-153. The interval 174–201 (GPGAASGGERPNLKIDSTPVKPAGGGCC) is disordered. Residues Cys-200 and Cys-201 are each lipidated (S-geranylgeranyl cysteine). Cys-201 is subject to Cysteine methyl ester.

It belongs to the small GTPase superfamily. Rab family. Interacts with MICAL1 and MICAL2. Interacts (in GTP-bound form) with MICALCL, MICAL1 and MILCAL3. Interacts with GDI1; the interaction requires the GDP-bound state. Interacts with CHM/REP1; the interaction requires the GDP-bound form and is necessary for prenylation by GGTase II. Interacts with RabGAP TBC1D20. Interacts (in GDP-bound form) with lipid phosphatase MTMR6 (via GRAM domain); the interaction regulates MTMR6 recruitment to the endoplasmic reticulum-Golgi intermediate compartment. Interacts (in GDP-bound form) with lipid phosphatase MTMR7. In terms of assembly, (Microbial infection) Interacts with L.pneumophila AnkX. Interacts with L.pneumophila Lem3. Interacts with L.pneumophila SidD. Interacts with L.pneumophila DrrA. Mg(2+) serves as cofactor. Prenylated; by GGTase II, only after interaction of the substrate with Rab escort protein 1 (REP1). In terms of processing, (Microbial infection) AMPylation at Tyr-77 by L.pneumophila DrrA occurs in the switch 2 region and leads to moderate inactivation of the GTPase activity. It appears to prolong the lifetime of the GTP state of RAB1B by restricting access of GTPase effectors to switch 2 and blocking effector-stimulated GTP hydrolysis, thereby rendering RAB1B constitutively active. It is later de-AMPylated by L.pneumophila SidD, releasing RAB1B from bacterial phagosomes. Post-translationally, (Microbial infection) Phosphocholinated at Ser-76 by L.pneumophila AnkX, leading to displace GDP dissociation inhibitors (GDI). Both GDP-bound and GTP-bound forms can be phosphocholinated. Dephosphocholinated by L.pneumophila Lem3, restoring accessibility to L.pneumophila GTPase effector LepB. (Microbial infection) Glycosylated by S.typhimurium protein Ssek3: arginine GlcNAcylation prevents GTPase activity, thereby disrupting vesicular protein transport from the endoplasmic reticulum (ER) to the Golgi compartment.

The protein localises to the cytoplasm. It localises to the membrane. Its subcellular location is the preautophagosomal structure membrane. The protein resides in the perinuclear region. The enzyme catalyses GTP + H2O = GDP + phosphate + H(+). Regulated by guanine nucleotide exchange factors (GEFs) which promote the exchange of bound GDP for free GTP. Regulated by GTPase activating proteins (GAPs) including TBC1D20 which increases the GTP hydrolysis activity. Inhibited by GDP dissociation inhibitors (GDIs). The small GTPases Rab are key regulators of intracellular membrane trafficking, from the formation of transport vesicles to their fusion with membranes. Rabs cycle between an inactive GDP-bound form and an active GTP-bound form that is able to recruit to membranes different set of downstream effectors directly responsible for vesicle formation, movement, tethering and fusion. Plays a role in the initial events of the autophagic vacuole development which take place at specialized regions of the endoplasmic reticulum. Regulates vesicular transport between the endoplasmic reticulum and successive Golgi compartments. Required to modulate the compacted morphology of the Golgi. Promotes the recruitment of lipid phosphatase MTMR6 to the endoplasmic reticulum-Golgi intermediate compartment. This chain is Ras-related protein Rab-1B, found in Homo sapiens (Human).